The following is a 96-amino-acid chain: Phosphoribosyl-ATP pyrophosphatase (96 aa).

Belongs to the PRA-PH family.

The protein resides in the cytoplasm. The enzyme catalyses 1-(5-phospho-beta-D-ribosyl)-ATP + H2O = 1-(5-phospho-beta-D-ribosyl)-5'-AMP + diphosphate + H(+). The protein operates within amino-acid biosynthesis; L-histidine biosynthesis; L-histidine from 5-phospho-alpha-D-ribose 1-diphosphate: step 2/9. The sequence is that of Phosphoribosyl-ATP pyrophosphatase from Methanococcus maripaludis (strain DSM 14266 / JCM 13030 / NBRC 101832 / S2 / LL).